We begin with the raw amino-acid sequence, 216 residues long: Elongation factor Ts (216 aa).

The involved in Mg(2+) ion dislocation from EF-Tu stretch occupies residues 80–83 (TDFV).

It belongs to the EF-Ts family.

It is found in the cytoplasm. In terms of biological role, associates with the EF-Tu.GDP complex and induces the exchange of GDP to GTP. It remains bound to the aminoacyl-tRNA.EF-Tu.GTP complex up to the GTP hydrolysis stage on the ribosome. This chain is Elongation factor Ts, found in Alkaliphilus oremlandii (strain OhILAs) (Clostridium oremlandii (strain OhILAs)).